The primary structure comprises 427 residues: Peptidase B (427 aa).

Residues K195 and D200 each contribute to the Mn(2+) site. Residue K207 is part of the active site. Residues D218, D277, and E279 each coordinate Mn(2+). R281 is an active-site residue.

Belongs to the peptidase M17 family. In terms of assembly, homohexamer. The cofactor is Mn(2+).

Its subcellular location is the cytoplasm. The enzyme catalyses Release of an N-terminal amino acid, Xaa, from a peptide or arylamide. Xaa is preferably Glu or Asp but may be other amino acids, including Leu, Met, His, Cys and Gln.. Functionally, probably plays an important role in intracellular peptide degradation. The sequence is that of Peptidase B from Escherichia coli O157:H7.